A 793-amino-acid chain; its full sequence is Ankyrin repeat domain-containing protein SOWAHB (793 aa).

Disordered stretches follow at residues 83 to 185 (EEGL…QARA), 219 to 290 (ATAE…ELLT), 337 to 360 (QLPLEPGSTEPNSEPPDPCLSSHS), and 396 to 543 (DFVD…SPRV). Low complexity-rich tracts occupy residues 96-108 (APSAGGAAPCSPR), 134-144 (AGAAARAADAA), and 175-185 (AAAAAGAQARA). Ser-106 carries the post-translational modification Phosphoserine. A compositionally biased stretch (basic and acidic residues) spans 220–244 (TAEEKPARALPAQDDRGASREREEG). The span at 246 to 273 (LAEPAPVPAVAHSPPATVEAATSRASPP) shows a compositional bias: low complexity. Position 271 is a phosphoserine (Ser-271). Positions 396–406 (DFVDQESDGSE) are enriched in acidic residues. Low complexity-rich tracts occupy residues 407–417 (ESSSGPKDSPG) and 498–508 (RSSLAGRAKLS). A compositionally biased stretch (basic residues) spans 521–533 (KRSRRPPRSRKPS). 2 ANK repeats span residues 630–659 (TGYTALHWIAKHGDLRALQDLVSGAKKAGI) and 669–699 (CGYTPLHLAAIHGHQGVIKLLVQRLASRVNV). Ser-761 is modified (phosphoserine).

It belongs to the SOWAH family.

This chain is Ankyrin repeat domain-containing protein SOWAHB (SOWAHB), found in Homo sapiens (Human).